The sequence spans 439 residues: Transmembrane protease serine 11F (439 aa).

The Cytoplasmic portion of the chain corresponds to 1–33; the sequence is MMYAPVEFSQTAYPRIEYQRRQQQFWDPIRLAL. The helical; Signal-anchor for type II membrane protein transmembrane segment at 34–54 threads the bilayer; sequence FTLAIVAIVGITIGIVTHFVV. Topologically, residues 55–439 are extracellular; sequence EDDKSFYYLA…RDWIASKTGL (385 aa). The region spanning 58–176 is the SEA domain; it reads KSFYYLASFQ…PSFSLTPIDS (119 aa). Residues 207–438 enclose the Peptidase S1 domain; sequence IVQGRETAME…YRDWIASKTG (232 aa). Cysteine 234 and cysteine 250 are disulfide-bonded. Residues histidine 249 and aspartate 294 each act as charge relay system in the active site. Cystine bridges form between cysteine 359–cysteine 375 and cysteine 386–cysteine 414. Serine 390 (charge relay system) is an active-site residue.

Belongs to the peptidase S1 family.

The protein resides in the membrane. Functionally, probable serine protease. This Mus musculus (Mouse) protein is Transmembrane protease serine 11F (Tmprss11f).